The chain runs to 154 residues: Egg-lysin (154 aa).

An N-terminal signal peptide occupies residues 1–18 (MKLLVLCIFAMMATLAMS).

In terms of assembly, homodimer. In terms of tissue distribution, sperm.

Functionally, dissolves the egg vitelline layer nonenzymatically during fertilization. It creates a hole of about 3 mu-m in diameter through which the sperm pass. The sequence is that of Egg-lysin from Haliotis sorenseni (White abalone).